Reading from the N-terminus, the 265-residue chain is Homeobox protein CDX-1 (265 aa).

Residues 9–153 (KDSPVYPGPA…GGGGSGKTRT (145 aa)) are disordered. Residues 30–42 (YGPPAPPPAPPQY) are compositionally biased toward pro residues. Positions 73-92 (AAAYGPGPAAPAASPASLAF) are enriched in low complexity. Residues 93-108 (GPPPDFSPVPAPPGPG) are compositionally biased toward pro residues. Positions 110-126 (GLLAQPLGGPGTPSSPG) are enriched in low complexity. Positions 154–213 (KDKYRVVYTDHQRLELEKEFHYSRYITIRRKSELAANLGLTERQVKIWFQNRRAKERKVN) form a DNA-binding region, homeobox. Positions 157–178 (YRVVYTDHQRLELEKEFHYSRY) are interaction with DNA. Residues 196-207 (RQVKIWFQNRRA) form an interaction with 5-mCpG DNA region. Basic residues predominate over residues 207-217 (AKERKVNKKKQ). Residues 207 to 265 (AKERKVNKKKQQQQQPPQPPMAHDITATPAGPSLGGLCPSNTSLLATSSPMPVKEEFLP) are disordered. The segment covering 245–256 (PSNTSLLATSSP) has biased composition (polar residues).

This sequence belongs to the Caudal homeobox family. In terms of tissue distribution, intestinal epithelium.

It localises to the nucleus. Functionally, plays a role in transcriptional regulation. Involved in activated KRAS-mediated transcriptional activation of PRKD1 in colorectal cancer (CRC) cells. Binds to the PRKD1 promoter in colorectal cancer (CRC) cells. Could play a role in the terminal differentiation of the intestine. Binds preferentially to methylated DNA. The polypeptide is Homeobox protein CDX-1 (CDX1) (Homo sapiens (Human)).